Reading from the N-terminus, the 413-residue chain is Histidine--tRNA ligase (413 aa).

This sequence belongs to the class-II aminoacyl-tRNA synthetase family.

The protein resides in the cytoplasm. It carries out the reaction tRNA(His) + L-histidine + ATP = L-histidyl-tRNA(His) + AMP + diphosphate + H(+). This is Histidine--tRNA ligase from Methanosarcina acetivorans (strain ATCC 35395 / DSM 2834 / JCM 12185 / C2A).